Reading from the N-terminus, the 544-residue chain is Secreted aspartic protease 9 (544 aa).

A signal peptide spans Met1 to Ala17. The segment at Gly31–Arg50 is disordered. The 415-residue stretch at Tyr65–Ala479 folds into the Peptidase A1 domain. Asp83–Gly85 provides a ligand contact to pepstatin A. Cysteines 98 and 195 form a disulfide. Thr167 is a catalytic residue. N-linked (GlcNAc...) asparagine glycosylation is found at Asn212, Asn240, and Asn252. Residue Asp371 is part of the active site. A pepstatin A-binding site is contributed by Asp371–Thr375. An intrachain disulfide couples Cys406 to Cys441. N-linked (GlcNAc...) asparagine glycosylation is found at Asn422 and Asn499. Positions Ser500 to Ser520 are disordered.

It belongs to the peptidase A1 family. In terms of assembly, monomer. Post-translationally, the GPI-anchor is attached to the protein in the endoplasmic reticulum and serves to target the protein to the cell surface. There, the glucosamine-inositol phospholipid moiety is cleaved off and the GPI-modified mannoprotein is covalently attached via its lipidless GPI glycan remnant to the 1,6-beta-glucan of the outer cell wall layer.

It is found in the cell membrane. The protein resides in the secreted. Its subcellular location is the cell wall. The catalysed reaction is Preferential cleavage at the carboxyl of hydrophobic amino acids, but fails to cleave 15-Leu-|-Tyr-16, 16-Tyr-|-Leu-17 and 24-Phe-|-Phe-25 of insulin B chain. Activates trypsinogen, and degrades keratin.. In terms of biological role, secreted aspartic peptidases (SAPs) are a group of ten acidic hydrolases considered as key virulence factors. These enzymes supply the fungus with nutrient amino acids as well as are able to degrade the selected host's proteins involved in the immune defense. Moreover, acts toward human hemoglobin though limited proteolysis to generate a variety of antimicrobial hemocidins, enabling to compete with the other microorganisms of the same physiological niche using the microbicidal peptides generated from the host protein. Its function is as follows. Plays a key role in defense against host by cleaving histatin-5 (Hst 5), a peptide from human saliva that carries out fungicidal activity. The cleavage rate decreases in an order of SAP2 &gt; SAP9 &gt; SAP3 &gt; SAP7 &gt; SAP4 &gt; SAP1 &gt; SAP8. The first cleavage occurs between residues 'Lys-17' and 'His-18' of Hst 5, giving DSHAKRHHGYKRKFHEK and HHSHRGY peptides. Simultaneously, the DSHAKRHHGYKRK peptide is also formed. Further fragmentation by SAP9 results in FHEK product. The polypeptide is Secreted aspartic protease 9 (Candida albicans (Yeast)).